The sequence spans 77 residues: Putative sulfur carrier protein AF_0188 (77 aa).

Residue C11 is the Cysteine persulfide intermediate of the active site.

The protein belongs to the sulfur carrier protein TusA family.

The protein is Putative sulfur carrier protein AF_0188 of Archaeoglobus fulgidus (strain ATCC 49558 / DSM 4304 / JCM 9628 / NBRC 100126 / VC-16).